The chain runs to 277 residues: Probable enoyl-CoA hydratase, mitochondrial (277 aa).

The transit peptide at 1 to 42 (MLKQVIKTVSSSQAPKKYFFKQFCTSTTEKKGRVGLVTLNRP) directs the protein to the mitochondrion. Residues 85-88 (ADIK) and glycine 128 each bind substrate.

The protein belongs to the enoyl-CoA hydratase/isomerase family. As to quaternary structure, homohexamer; dimer of trimers.

Its subcellular location is the mitochondrion matrix. It carries out the reaction a (3S)-3-hydroxyacyl-CoA = a (2E)-enoyl-CoA + H2O. It catalyses the reaction a 4-saturated-(3S)-3-hydroxyacyl-CoA = a (3E)-enoyl-CoA + H2O. The catalysed reaction is (3S)-3-hydroxybutanoyl-CoA = (2E)-butenoyl-CoA + H2O. The enzyme catalyses 3-hydroxyisovaleryl-CoA = 3-methylbut-2-enoyl-CoA + H2O. It carries out the reaction 3-hydroxypropanoyl-CoA = acryloyl-CoA + H2O. It catalyses the reaction 3-hydroxybutanoyl-CoA = (2E)-butenoyl-CoA + H2O. It functions in the pathway lipid metabolism; fatty acid beta-oxidation. Straight-chain enoyl-CoA thioesters from C4 up to at least C16 are processed, although with decreasing catalytic rate. The protein is Probable enoyl-CoA hydratase, mitochondrial (echs1) of Dictyostelium discoideum (Social amoeba).